The primary structure comprises 298 residues: Glycine--tRNA ligase alpha subunit (298 aa).

Belongs to the class-II aminoacyl-tRNA synthetase family. In terms of assembly, tetramer of two alpha and two beta subunits.

It is found in the cytoplasm. It carries out the reaction tRNA(Gly) + glycine + ATP = glycyl-tRNA(Gly) + AMP + diphosphate. The chain is Glycine--tRNA ligase alpha subunit from Helicobacter pylori (strain Shi470).